The chain runs to 1259 residues: Protein flightless-1 homolog (1259 aa).

LRR repeat units follow at residues 7–32 (LPFI…VKSM), 33–55 (TSLR…LASL), 56–78 (QKLE…LSSL), 80–103 (NLRA…IFQL), 104–126 (DDLS…LENS), 128–149 (NMLV…LFIN), 150–173 (LTDL…MRRL), 176–201 (LQTL…VSLQ), 222–245 (LSNL…LYSL), 247–268 (NLKR…IDQW), 269–291 (TKLE…ICKL), 293–316 (KLKK…VGKL), 317–339 (SNLV…LCRC), 340–363 (GKLK…HFLT), and 365–385 (LEVL…PVDR). 4 Gelsolin-like repeats span residues 509-589 (IPIQ…SEEF), 628-702 (NIRL…PEFW), 757-830 (DVVP…CQVF), and 1170-1225 (EKCS…RSKD).

Expressed in ventricular cardiomyocytes, where it particularly localizes to intercalated disks and costamere-like structures (at protein level).

Its subcellular location is the nucleus. The protein resides in the cytoplasm. It localises to the cytoskeleton. The protein localises to the microtubule organizing center. It is found in the centrosome. Its subcellular location is the cell junction. The protein resides in the focal adhesion. Is a regulator of actin polymerization, required for proper myofibril organization and the assembly of cardiomyocyte cell adhesion complexes. Is a regulator of the length of sarcomeric thin filaments. Regulates cytoskeletal rearrangements involved in cytokinesis and cell migration, by inhibiting Rac1-dependent paxillin phosphorylation. May play a role as coactivator in transcriptional activation by hormone-activated nuclear receptors (NR) and acts in cooperation with NCOA2 and CARM1. Involved in estrogen hormone signaling. This chain is Protein flightless-1 homolog, found in Danio rerio (Zebrafish).